Here is a 398-residue protein sequence, read N- to C-terminus: Cytochrome b (398 aa).

A run of 4 helical transmembrane segments spans residues 38–58 (FGPL…FLAM), 82–104 (WFLR…FHMF), 119–139 (VRCS…IGYV), and 185–205 (FFSL…LHLG). Heme b is bound by residues H88 and H102. The heme b site is built by H189 and H203. A ubiquinone is bound at residue H208. Helical transmembrane passes span 231–251 (YYVK…IFIF), 295–316 (AGGV…FLNQ), 328–348 (IYHI…WIGC), and 355–374 (FVTI…AIMP).

It belongs to the cytochrome b family. As to quaternary structure, the main subunits of complex b-c1 are: cytochrome b, cytochrome c1 and the Rieske protein. Requires heme b as cofactor.

The protein localises to the mitochondrion inner membrane. In terms of biological role, component of the ubiquinol-cytochrome c reductase complex (complex III or cytochrome b-c1 complex) that is part of the mitochondrial respiratory chain. The b-c1 complex mediates electron transfer from ubiquinol to cytochrome c. Contributes to the generation of a proton gradient across the mitochondrial membrane that is then used for ATP synthesis. The protein is Cytochrome b (MT-CYB) of Daucus carota (Wild carrot).